The following is a 295-amino-acid chain: Large ribosomal subunit protein uL29m (295 aa).

It belongs to the universal ribosomal protein uL29 family. As to quaternary structure, component of the mitochondrial large ribosomal subunit. Mature mitochondrial ribosomes consist of a small (37S) and a large (54S) subunit. The 37S subunit contains at least 33 different proteins and 1 molecule of RNA (15S). The 54S subunit contains at least 45 different proteins and 1 molecule of RNA (21S).

The protein localises to the mitochondrion. In Meyerozyma guilliermondii (strain ATCC 6260 / CBS 566 / DSM 6381 / JCM 1539 / NBRC 10279 / NRRL Y-324) (Yeast), this protein is Large ribosomal subunit protein uL29m (MRPL4).